Reading from the N-terminus, the 444-residue chain is Argininosuccinate synthase (444 aa).

ATP-binding positions include 17 to 25 (AFSGGLDTS) and A43. L-citrulline is bound at residue Y99. Positions 129 and 131 each coordinate ATP. 3 residues coordinate L-aspartate: T131, N135, and D136. Position 135 (N135) interacts with L-citrulline. D136 contacts ATP. The L-citrulline site is built by R139 and S192. Position 194 (D194) interacts with ATP. Residues T201, E203, and E280 each contribute to the L-citrulline site.

Belongs to the argininosuccinate synthase family. Type 2 subfamily. Homotetramer.

It localises to the cytoplasm. The enzyme catalyses L-citrulline + L-aspartate + ATP = 2-(N(omega)-L-arginino)succinate + AMP + diphosphate + H(+). The protein operates within amino-acid biosynthesis; L-arginine biosynthesis; L-arginine from L-ornithine and carbamoyl phosphate: step 2/3. The sequence is that of Argininosuccinate synthase from Delftia acidovorans (strain DSM 14801 / SPH-1).